Consider the following 147-residue polypeptide: Small ribosomal subunit protein uS12 (147 aa).

This sequence belongs to the universal ribosomal protein uS12 family. As to quaternary structure, part of the 30S ribosomal subunit.

Its function is as follows. With S4 and S5 plays an important role in translational accuracy. Located at the interface of the 30S and 50S subunits. The protein is Small ribosomal subunit protein uS12 of Sulfolobus acidocaldarius (strain ATCC 33909 / DSM 639 / JCM 8929 / NBRC 15157 / NCIMB 11770).